The chain runs to 265 residues: Glutamate racemase (265 aa).

Substrate is bound by residues 7 to 8 and 39 to 40; these read DS and YG. The Proton donor/acceptor role is filled by Cys70. Residue 71-72 participates in substrate binding; it reads NT. Cys179 acts as the Proton donor/acceptor in catalysis. 180-181 provides a ligand contact to substrate; sequence TH.

Belongs to the aspartate/glutamate racemases family.

The enzyme catalyses L-glutamate = D-glutamate. Its pathway is cell wall biogenesis; peptidoglycan biosynthesis. Functionally, provides the (R)-glutamate required for cell wall biosynthesis. The sequence is that of Glutamate racemase from Gloeobacter violaceus (strain ATCC 29082 / PCC 7421).